The following is a 396-amino-acid chain: Acetylornithine aminotransferase 2 (396 aa).

Pyridoxal 5'-phosphate contacts are provided by residues 102-103 and Phe-134; that span reads GA. Arg-137 contributes to the N(2)-acetyl-L-ornithine binding site. 219–222 is a pyridoxal 5'-phosphate binding site; the sequence is DEVQ. Lys-248 is subject to N6-(pyridoxal phosphate)lysine. Residue Thr-276 participates in pyridoxal 5'-phosphate binding.

Belongs to the class-III pyridoxal-phosphate-dependent aminotransferase family. ArgD subfamily. As to quaternary structure, homodimer. The cofactor is pyridoxal 5'-phosphate.

It localises to the cytoplasm. The catalysed reaction is N(2)-acetyl-L-ornithine + 2-oxoglutarate = N-acetyl-L-glutamate 5-semialdehyde + L-glutamate. Its pathway is amino-acid biosynthesis; L-arginine biosynthesis; N(2)-acetyl-L-ornithine from L-glutamate: step 4/4. In Bordetella bronchiseptica (strain ATCC BAA-588 / NCTC 13252 / RB50) (Alcaligenes bronchisepticus), this protein is Acetylornithine aminotransferase 2.